The sequence spans 139 residues: CLAVATA3/ESR (CLE)-related protein 1 (139 aa).

The N-terminal stretch at M1–A22 is a signal peptide. The interval S23–M90 is required for secretion from the host cytoplasm to the host apoplasm. 2 N-linked (GlcNAc...) asparagine glycosylation sites follow: N37 and N87. The segment at A66–H139 is disordered. Residues E100–D125 are a coiled coil. The span at R106 to R128 shows a compositional bias: basic and acidic residues. The CLE motif lies at R128–H139.

The protein belongs to the CLV3/ESR signal peptide family. As to expression, highly expressed exclusively within the dorsal esophageal gland cell during syncytium formation in host plants (at protein level).

It localises to the secreted. It is found in the host cytoplasm. The protein resides in the host extracellular space. The protein localises to the extracellular space. Its subcellular location is the apoplast. In terms of biological role, mimics host plant CLE extracellular signal peptides that regulate cell fate. May play a role in the differentiation or division of feeding cells (syncytia) induced in plant roots during infection. This chain is CLAVATA3/ESR (CLE)-related protein 1 (CLE1), found in Heterodera glycines (Soybean cyst nematode worm).